The primary structure comprises 371 residues: Queuine tRNA-ribosyltransferase (371 aa).

The active-site Proton acceptor is the D90. Residues 90-94 (DSGGF), D144, Q188, and G215 each bind substrate. Residues 246 to 252 (GVGTPED) are RNA binding. D265 (nucleophile) is an active-site residue. Residues 270-274 (TRNAR) are RNA binding; important for wobble base 34 recognition. Residues C303, C305, C308, and H334 each coordinate Zn(2+).

The protein belongs to the queuine tRNA-ribosyltransferase family. In terms of assembly, homodimer. Within each dimer, one monomer is responsible for RNA recognition and catalysis, while the other monomer binds to the replacement base PreQ1. Requires Zn(2+) as cofactor.

The enzyme catalyses 7-aminomethyl-7-carbaguanine + guanosine(34) in tRNA = 7-aminomethyl-7-carbaguanosine(34) in tRNA + guanine. The protein operates within tRNA modification; tRNA-queuosine biosynthesis. Its function is as follows. Catalyzes the base-exchange of a guanine (G) residue with the queuine precursor 7-aminomethyl-7-deazaguanine (PreQ1) at position 34 (anticodon wobble position) in tRNAs with GU(N) anticodons (tRNA-Asp, -Asn, -His and -Tyr). Catalysis occurs through a double-displacement mechanism. The nucleophile active site attacks the C1' of nucleotide 34 to detach the guanine base from the RNA, forming a covalent enzyme-RNA intermediate. The proton acceptor active site deprotonates the incoming PreQ1, allowing a nucleophilic attack on the C1' of the ribose to form the product. After dissociation, two additional enzymatic reactions on the tRNA convert PreQ1 to queuine (Q), resulting in the hypermodified nucleoside queuosine (7-(((4,5-cis-dihydroxy-2-cyclopenten-1-yl)amino)methyl)-7-deazaguanosine). This chain is Queuine tRNA-ribosyltransferase, found in Neisseria meningitidis serogroup B (strain ATCC BAA-335 / MC58).